The chain runs to 706 residues: Protein MAM3 (706 aa).

Residues 1–16 (MSFLPLRSRSRSGAPH) are Vacuolar-facing. Residues 17–37 (WVYIILYHIFTIPKIYSLPLL) traverse the membrane as a helical segment. At 38-65 (SGSHVLNSRDVADSGHSVGDEASVTTYY) the chain is on the cytoplasmic side. Positions 57 to 240 (DEASVTTYYI…MGVERLTKDE (184 aa)) constitute a CNNM transmembrane domain. A helical transmembrane segment spans residues 66 to 86 (IISIILVLLGGVFAGLTLGLM). Topologically, residues 87–120 (GQDEVYLKVISTSGSNSEKKLAKRVLDLISRGKH) are vacuolar. A helical transmembrane segment spans residues 121–141 (WVLVTLLLSNVITNETLPIVL). The Cytoplasmic portion of the chain corresponds to 142–145 (DRCL). A helical transmembrane segment spans residues 146–166 (GGGWQAVVSSTILIVIFGEII). Topologically, residues 167 to 177 (PQSVCVKYGLQ) are vacuolar. A helical membrane pass occupies residues 178–198 (VGAFFCPFVLVLMYLMYPVAY). The Cytoplasmic segment spans residues 199–706 (PIATLLDYML…ANGSSSTIKR (508 aa)). 2 consecutive CBS domains span residues 259–320 (MTPI…DCLP) and 321–386 (ISHF…IVDE). 3 disordered regions span residues 421-495 (SHKE…ASNP), 515-540 (ITTH…LSAE), and 557-597 (LHTQ…ENQN). The span at 433 to 445 (ESSPLLSPSNSNH) shows a compositional bias: low complexity. 2 positions are modified to phosphoserine: serine 439 and serine 447. Positions 472 to 495 (AVLSPTPQVTEHGTIIPSNLASNP) are enriched in polar residues. At serine 527 the chain carries Phosphoserine. Residues 566–575 (TQVTTSTKTT) show a composition bias toward low complexity. Over residues 576 to 597 (RNSPDSISIPNSGANHGNENQN) the composition is skewed to polar residues. A Phosphoserine modification is found at serine 603. A Phosphotyrosine modification is found at tyrosine 604. Residue threonine 607 is modified to Phosphothreonine. Position 614 is a phosphoserine (serine 614). The tract at residues 626-706 (IGPAKDWDES…ANGSSSTIKR (81 aa)) is disordered. Residues 630 to 639 (KDWDESKSEY) show a composition bias toward basic and acidic residues. Positions 658-680 (SSSNASLFSSIKNKFKNENANNN) are enriched in low complexity. A compositionally biased stretch (polar residues) spans 681–706 (DRSNFTDSLSRTSNYDANGSSSTIKR).

This sequence belongs to the ACDP family.

It localises to the vacuole membrane. In terms of biological role, involved in metal homeostasis and more specially in manganese sensitivity. This is Protein MAM3 (MAM3) from Saccharomyces cerevisiae (strain ATCC 204508 / S288c) (Baker's yeast).